The primary structure comprises 375 residues: tRNA-specific 2-thiouridylase MnmA (375 aa).

ATP-binding positions include 12 to 19 (GMSGGVDS) and methionine 38. Residues 98 to 100 (NPD) form an interaction with target base in tRNA region. The active-site Nucleophile is cysteine 103. A disulfide bond links cysteine 103 and cysteine 200. Residue glycine 127 participates in ATP binding. Positions 150-152 (KDQ) are interaction with tRNA. Cysteine 200 functions as the Cysteine persulfide intermediate in the catalytic mechanism. The segment at 312-313 (RY) is interaction with tRNA.

The protein belongs to the MnmA/TRMU family.

The protein resides in the cytoplasm. It carries out the reaction S-sulfanyl-L-cysteinyl-[protein] + uridine(34) in tRNA + AH2 + ATP = 2-thiouridine(34) in tRNA + L-cysteinyl-[protein] + A + AMP + diphosphate + H(+). In terms of biological role, catalyzes the 2-thiolation of uridine at the wobble position (U34) of tRNA, leading to the formation of s(2)U34. The polypeptide is tRNA-specific 2-thiouridylase MnmA (Lactobacillus delbrueckii subsp. bulgaricus (strain ATCC BAA-365 / Lb-18)).